The chain runs to 353 residues: Suppressor of RNA-mediated gene silencing (353 aa).

It belongs to the phytoreovirus non-structural protein 10 family.

Suppressor of RNA-mediated gene silencing, also known as post-transcriptional gene silencing (PTGS), a mechanism of plant viral defense that limits the accumulation of viral RNAs. The polypeptide is Suppressor of RNA-mediated gene silencing (Rice dwarf virus (isolate Fujian) (RDV)).